Here is a 191-residue protein sequence, read N- to C-terminus: Early nodulin-like protein 8 (191 aa).

A signal peptide spans 1 to 22 (MGVMSLSKTMVVVVLQVMILLG). One can recognise a Phytocyanin domain in the interval 31 to 133 (TLYKVGDLDA…YQKLLVSVGT (103 aa)). An intrachain disulfide couples Cys-87 to Cys-121. Residues Asn-104 and Asn-108 are each glycosylated (N-linked (GlcNAc...) asparagine). The GPI-anchor amidated serine moiety is linked to residue Ser-165. Positions 166–191 (SASSSLISAFSTVAASLACAVVGAIM) are cleaved as a propeptide — removed in mature form.

The protein belongs to the early nodulin-like (ENODL) family. Mostly expressed in seedlings and roots, and, to a lower extent, in leaves, flowers, stems and seeds.

The protein localises to the cell membrane. Functionally, may act as a carbohydrate transporter. In Arabidopsis thaliana (Mouse-ear cress), this protein is Early nodulin-like protein 8.